Reading from the N-terminus, the 576-residue chain is RING finger and SPRY domain-containing protein 1 (576 aa).

The signal sequence occupies residues 1–16 (MIVFGWAVFLASRSLG). S50 is subject to Phosphoserine. Residues 50–99 (SGTDDSVDTQQQQAENSAVPTADTRSQPRDPVRPPRRGRGPHEPRRKKQN) are disordered. A compositionally biased stretch (polar residues) spans 57–68 (DTQQQQAENSAV). Positions 83–97 (PPRRGRGPHEPRRKK) are enriched in basic residues. Residues 300–483 (LFLKEGRQLT…CEFNFGAKPF (184 aa)) enclose the B30.2/SPRY domain. An N-linked (GlcNAc...) asparagine glycan is attached at N314. The segment at 527-562 (CSLCCDEVADTQLKPCGHSDLCMDCALQLETCPLCR) adopts an RING-type zinc-finger fold.

Its subcellular location is the secreted. This Homo sapiens (Human) protein is RING finger and SPRY domain-containing protein 1 (RSPRY1).